Consider the following 573-residue polypeptide: Potassium-transporting ATPase potassium-binding subunit (573 aa).

10 helical membrane passes run 6–26, 66–86, 135–155, 177–197, 257–277, 283–303, 382–402, 428–448, 493–513, and 537–557; these read ILFALFIVTIALITKPLGSYI, FFSLVSFSVMAFIFVLVILLL, ALAVQNFVSAAVGLCVAIALI, VFWILLPISIVIAIVYIFQGV, IQMVSIFAIAAALTYTFGKWV, GWLIFGVMLVLFIISLVVMTI, IFGGVGAGFYGFFMFLMLAVF, MFALLISPCCVLVFTGLAAVI, ITIALSMLIGRFGVIFAVIML, and FIFAILVFFTILLIGGLTIFP.

It belongs to the KdpA family. As to quaternary structure, the system is composed of three essential subunits: KdpA, KdpB and KdpC.

The protein localises to the cell inner membrane. In terms of biological role, part of the high-affinity ATP-driven potassium transport (or Kdp) system, which catalyzes the hydrolysis of ATP coupled with the electrogenic transport of potassium into the cytoplasm. This subunit binds the periplasmic potassium ions and delivers the ions to the membrane domain of KdpB through an intramembrane tunnel. The chain is Potassium-transporting ATPase potassium-binding subunit from Francisella tularensis subsp. mediasiatica (strain FSC147).